The following is a 94-amino-acid chain: Selenoprotein K (94 aa).

A helical transmembrane segment spans residues 20 to 42; sequence LSFLTDFFWGAVEFIGLFFQTLV. The segment at 48-94 is disordered; sequence KDGNNSASSRFSDGRGPPGFPGRRRMGRINHGAGPTPPPMGGGGUGR. Residues 49-58 are compositionally biased toward polar residues; it reads DGNNSASSRF. Selenocysteine 92 is a non-standard amino acid (selenocysteine).

This sequence belongs to the selenoprotein K family.

It is found in the endoplasmic reticulum membrane. It localises to the cell membrane. Required for Ca(2+) flux in immune cells and plays a role in T-cell proliferation and in T-cell and neutrophil migration. Involved in endoplasmic reticulum-associated degradation (ERAD) of soluble glycosylated proteins. Required for cell surface expression of CD36 and involved in macrophage uptake of low-density lipoprotein and in foam cell formation. Required for palmitoylation. This chain is Selenoprotein K (selenok), found in Danio rerio (Zebrafish).